Reading from the N-terminus, the 571-residue chain is Sulfite reductase [NADPH] hemoprotein beta-component (571 aa).

The [4Fe-4S] cluster site is built by Cys-435, Cys-441, Cys-480, and Cys-484. Position 484 (Cys-484) interacts with siroheme.

This sequence belongs to the nitrite and sulfite reductase 4Fe-4S domain family. Alpha(8)-beta(8). The alpha component is a flavoprotein, the beta component is a hemoprotein. Siroheme is required as a cofactor. The cofactor is [4Fe-4S] cluster.

The catalysed reaction is hydrogen sulfide + 3 NADP(+) + 3 H2O = sulfite + 3 NADPH + 4 H(+). Its pathway is sulfur metabolism; hydrogen sulfide biosynthesis; hydrogen sulfide from sulfite (NADPH route): step 1/1. Its function is as follows. Component of the sulfite reductase complex that catalyzes the 6-electron reduction of sulfite to sulfide. This is one of several activities required for the biosynthesis of L-cysteine from sulfate. This chain is Sulfite reductase [NADPH] hemoprotein beta-component, found in Dickeya chrysanthemi (strain Ech1591) (Dickeya zeae (strain Ech1591)).